Consider the following 309-residue polypeptide: GDP-6-deoxy-D-mannose reductase (309 aa).

Residues 11-12, arginine 32, 47-48, and 71-73 contribute to the NADP(+) site; these read FV, DI, and AKS. 114-115 contributes to the substrate binding site; the sequence is SS. Tyrosine 140 is a binding site for NADP(+). Residues asparagine 169, aspartate 183, arginine 209, and 269 to 272 contribute to the substrate site; that span reads RPSE.

This sequence belongs to the NAD(P)-dependent epimerase/dehydratase family. GDP-6-deoxy-D-mannose reductase subfamily.

It carries out the reaction GDP-alpha-D-rhamnose + NAD(+) = GDP-4-dehydro-alpha-D-rhamnose + NADH + H(+). The catalysed reaction is GDP-alpha-D-rhamnose + NADP(+) = GDP-4-dehydro-alpha-D-rhamnose + NADPH + H(+). Reductase that catalyzes the conversion of GDP-6-deoxy-D-mannose to GDP-4-dehydro-6-deoxy-D-mannose (GDP-D-rhamnose). The protein is GDP-6-deoxy-D-mannose reductase (rmd) of Aneurinibacillus thermoaerophilus.